The primary structure comprises 129 residues: NADPH-dependent 7-cyano-7-deazaguanine reductase (129 aa).

The active-site Thioimide intermediate is Cys-34. Asp-41 (proton donor) is an active-site residue. Residues 56–58 (VEL) and 75–76 (HE) each bind substrate.

Belongs to the GTP cyclohydrolase I family. QueF type 1 subfamily.

The protein resides in the cytoplasm. The catalysed reaction is 7-aminomethyl-7-carbaguanine + 2 NADP(+) = 7-cyano-7-deazaguanine + 2 NADPH + 3 H(+). It functions in the pathway tRNA modification; tRNA-queuosine biosynthesis. Functionally, catalyzes the NADPH-dependent reduction of 7-cyano-7-deazaguanine (preQ0) to 7-aminomethyl-7-deazaguanine (preQ1). The polypeptide is NADPH-dependent 7-cyano-7-deazaguanine reductase (Nitrosococcus oceani (strain ATCC 19707 / BCRC 17464 / JCM 30415 / NCIMB 11848 / C-107)).